We begin with the raw amino-acid sequence, 590 residues long: Dystrobrevin-1 (590 aa).

The span at 1–10 (MLWSNGGGGP) shows a compositional bias: gly residues. The disordered stretch occupies residues 1–25 (MLWSNGGGGPREPSSAPSPDHHRAM). The segment at 259 to 315 (YHPVVCDACQVRSFTGFRYKCQRCANYQLCQSCFWRGRTSQNHSNEHEMKEYSSYKS) adopts a ZZ-type zinc-finger fold. C264, C267, C279, C282, C288, C291, H301, and H305 together coordinate Zn(2+). Residues 434-508 (SMVGDERTLI…EHLMAQLNTG (75 aa)) are a coiled coil. Residues 468–590 (DGLAGLRDRK…DENGVTINGF (123 aa)) are essential for interaction with ctn-1. The segment at 484 to 490 (MFEMQQR) is essential for interaction with dys-1.

The protein belongs to the dystrophin family. Dystrobrevin subfamily. Component of the dystrophin glycoprotein complex (DGC). Interacts with dystrophin (dys-1) and syntrophin (stn-1) to form the DGC. Interacts (via C-terminus) with ctn-1 (via N-terminus); the interaction is required for localization of the dystrophin complex and ctn-1 near dense bodies in muscle cells. In terms of tissue distribution, from late embryogenesis to adulthood, expressed in neurons and muscles; particularly strong in the ventral nerve cord and in muscles of the body wall, head pharyngeal, and vulva; weaker in the intestinal muscle (at protein level).

It is found in the cytoplasm. Plays a role in cholinergic transmission and as a functional partner of dystrophin (dys-1), necessary for muscle maintenance. Required for localization of ctn-1 near dense bodies in muscle cells. This Caenorhabditis elegans protein is Dystrobrevin-1.